Consider the following 280-residue polypeptide: MGTTNGCAADSVAATYYDSQDADQFYEQVWGGEDIHIGLYATPDEAIATASDRTVHALLDLADPLPQGGCVVDLGAGYGGASRRLARWSERPVHAINISAVENDRHRRLNVDAGLEQQITVHDASFEQVPMADASADLVWSQDAILHAGDRAKVLAEVSRLLKPGGCFVFTDPMAADGVEMGLLQPILDRIHLPDLASPSRYKAWGEAVGLTMEVWDERTEMLVRHYDRVRQDTRLRRAELETSISSGYLDRMDVGLGHWVDGGQQGRLSWGLMRLRKPG.

The protein belongs to the methyltransferase superfamily. Monomer.

It catalyses the reaction N,N-dimethylglycine + S-adenosyl-L-methionine = glycine betaine + S-adenosyl-L-homocysteine + H(+). It participates in amine and polyamine biosynthesis; betaine biosynthesis via glycine pathway; betaine from glycine: step 3/3. Its function is as follows. Catalyzes the methylation of dimethylglycine to betaine with S-adenosylmethionine (AdoMet) acting as the methyl donor. It has strict specificity for dimethylglycine as the methyl group acceptors. The chain is Dimethylglycine N-methyltransferase from Parasynechococcus marenigrum (strain WH8102).